Consider the following 491-residue polypeptide: UDP-N-acetylmuramate--L-alanine ligase (491 aa).

Residue 115–121 (GTHGKTT) coordinates ATP.

It belongs to the MurCDEF family.

The protein localises to the cytoplasm. It catalyses the reaction UDP-N-acetyl-alpha-D-muramate + L-alanine + ATP = UDP-N-acetyl-alpha-D-muramoyl-L-alanine + ADP + phosphate + H(+). Its pathway is cell wall biogenesis; peptidoglycan biosynthesis. In terms of biological role, cell wall formation. This chain is UDP-N-acetylmuramate--L-alanine ligase, found in Parvibaculum lavamentivorans (strain DS-1 / DSM 13023 / NCIMB 13966).